We begin with the raw amino-acid sequence, 85 residues long: U4-theraphotoxin-Hhn1a (85 aa).

The first 22 residues, 1 to 22 (MKVTLISILTCAAVLVLHTTAA), serve as a signal peptide directing secretion. Positions 23–48 (EELEAESQLMEVGMPDTELAAVDEER) are excised as a propeptide. Disulfide bonds link Cys-52–Cys-66, Cys-56–Cys-77, and Cys-71–Cys-82.

This sequence belongs to the neurotoxin 12 (Hwtx-2) family. 02 (Hwtx-2) subfamily. In terms of assembly, monomer. Expressed by the venom gland.

It is found in the secreted. Functionally, neurotoxin active on both insects and mammals. The sequence is that of U4-theraphotoxin-Hhn1a from Cyriopagopus hainanus (Chinese bird spider).